A 288-amino-acid polypeptide reads, in one-letter code: MENNLAPINEDPFPIKIGIIGDADLDTTISLQDRMEYAVCTPFGKPSDIIIEGLIDGVKCALLCRNGRLHDIMPTNINYRANIWAMRKLGCTHILVTHSLSSLREDIMPGDFVVPNDLIDHTTRRAQTFYDGALGSPFGVCHLPMYPAFCERTRQHLLNAAQELDLATHSKATVLTLEGPRYSTLAENNIYRKWGADLLSMTLSPEATLAKEAGILYASIGLVTNIECWCANQPIATTHEIIYVFKNKVEKLQQVLSKAIANISKEDWSEDILKAKILVCSNFANRNK.

Residue 65–66 coordinates phosphate; that stretch reads RN. Residue Met-201 participates in substrate binding. Thr-202 is a phosphate binding site.

It belongs to the PNP/MTAP phosphorylase family. MTAP subfamily. In terms of assembly, homotrimer.

It localises to the cytoplasm. It is found in the nucleus. It catalyses the reaction a purine D-ribonucleoside + phosphate = a purine nucleobase + alpha-D-ribose 1-phosphate. Its pathway is purine metabolism; purine nucleoside salvage. Functionally, purine nucleoside phosphorylase involved in purine salvage. The polypeptide is Purine nucleoside phosphorylase (Drosophila pseudoobscura pseudoobscura (Fruit fly)).